Consider the following 288-residue polypeptide: 4-diphosphocytidyl-2-C-methyl-D-erythritol kinase (288 aa).

Lysine 11 is an active-site residue. Residue 100–110 coordinates ATP; that stretch reads PIAAGLGSGSS. The active site involves aspartate 140.

It belongs to the GHMP kinase family. IspE subfamily.

The catalysed reaction is 4-CDP-2-C-methyl-D-erythritol + ATP = 4-CDP-2-C-methyl-D-erythritol 2-phosphate + ADP + H(+). The protein operates within isoprenoid biosynthesis; isopentenyl diphosphate biosynthesis via DXP pathway; isopentenyl diphosphate from 1-deoxy-D-xylulose 5-phosphate: step 3/6. Catalyzes the phosphorylation of the position 2 hydroxy group of 4-diphosphocytidyl-2C-methyl-D-erythritol. This Wolbachia pipientis wMel protein is 4-diphosphocytidyl-2-C-methyl-D-erythritol kinase.